The chain runs to 630 residues: tRNA uridine 5-carboxymethylaminomethyl modification enzyme MnmG (630 aa).

13-18 (GGGHAG) is an FAD binding site. 273–287 (GPRYCPSIEDKVNRF) provides a ligand contact to NAD(+).

It belongs to the MnmG family. Homodimer. Heterotetramer of two MnmE and two MnmG subunits. Requires FAD as cofactor.

Its subcellular location is the cytoplasm. Functionally, NAD-binding protein involved in the addition of a carboxymethylaminomethyl (cmnm) group at the wobble position (U34) of certain tRNAs, forming tRNA-cmnm(5)s(2)U34. The chain is tRNA uridine 5-carboxymethylaminomethyl modification enzyme MnmG from Saccharophagus degradans (strain 2-40 / ATCC 43961 / DSM 17024).